The primary structure comprises 218 residues: uncharacterized protein (218 aa).

The Toprim domain maps to 111-193; sequence NSIYLVEGDF…ITKVIEIKAA (83 aa).

This is an uncharacterized protein from Mycoplasma genitalium (strain ATCC 33530 / DSM 19775 / NCTC 10195 / G37) (Mycoplasmoides genitalium).